The primary structure comprises 180 residues: Cytidylate kinase 2 (180 aa).

Residue 7–15 (GKSGCGNTT) coordinates ATP.

The protein belongs to the cytidylate kinase family. Type 2 subfamily.

The protein resides in the cytoplasm. It carries out the reaction CMP + ATP = CDP + ADP. The catalysed reaction is dCMP + ATP = dCDP + ADP. The sequence is that of Cytidylate kinase 2 (cmk2) from Borreliella burgdorferi (strain ATCC 35210 / DSM 4680 / CIP 102532 / B31) (Borrelia burgdorferi).